The primary structure comprises 318 residues: Malate dehydrogenase (318 aa).

NAD(+)-binding positions include 10-15 (GGGQIG) and aspartate 34. Substrate-binding residues include arginine 83 and arginine 89. Residues asparagine 96 and 119–121 (ISN) each bind NAD(+). Substrate contacts are provided by asparagine 121 and arginine 152. Histidine 176 serves as the catalytic Proton acceptor.

Belongs to the LDH/MDH superfamily. MDH type 3 family.

The catalysed reaction is (S)-malate + NAD(+) = oxaloacetate + NADH + H(+). In terms of biological role, catalyzes the reversible oxidation of malate to oxaloacetate. The polypeptide is Malate dehydrogenase (Geotalea uraniireducens (strain Rf4) (Geobacter uraniireducens)).